Here is a 179-residue protein sequence, read N- to C-terminus: Lebocin-3 (179 aa).

Positions 1 to 16 (MYKFLVFSSVLVLFFA) are cleaved as a signal peptide. A propeptide spanning residues 17–120 (QASCQRFIQP…QPIESHRNTR (104 aa)) is cleaved from the precursor. O-linked (GalNAc...) threonine glycosylation occurs at T135. A propeptide spanning residues 153-179 (RRHASEDQEELRQYNEHFLIPRDIFQE) is cleaved from the precursor.

The protein belongs to the lebocin family. O-glycosylation is important for the antibacterial activity of lebocin. In terms of tissue distribution, hemolymph. Produced in fat body.

Its subcellular location is the secreted. In terms of biological role, antibacterial peptide. The polypeptide is Lebocin-3 (LEB3) (Bombyx mori (Silk moth)).